The following is a 349-amino-acid chain: S-adenosylmethionine:tRNA ribosyltransferase-isomerase (349 aa).

Belongs to the QueA family. In terms of assembly, monomer.

It is found in the cytoplasm. The catalysed reaction is 7-aminomethyl-7-carbaguanosine(34) in tRNA + S-adenosyl-L-methionine = epoxyqueuosine(34) in tRNA + adenine + L-methionine + 2 H(+). It functions in the pathway tRNA modification; tRNA-queuosine biosynthesis. Functionally, transfers and isomerizes the ribose moiety from AdoMet to the 7-aminomethyl group of 7-deazaguanine (preQ1-tRNA) to give epoxyqueuosine (oQ-tRNA). In Ruegeria sp. (strain TM1040) (Silicibacter sp.), this protein is S-adenosylmethionine:tRNA ribosyltransferase-isomerase.